A 256-amino-acid polypeptide reads, in one-letter code: Alcohol dehydrogenase (256 aa).

Ser-2 carries the post-translational modification N-acetylserine. NAD(+) is bound by residues 12-41 (FVAG…LDRI) and Asp-65. A substrate-binding site is contributed by Ser-140. Tyr-153 (proton acceptor) is an active-site residue. Lys-157 contacts NAD(+).

Belongs to the short-chain dehydrogenases/reductases (SDR) family. Homodimer.

It catalyses the reaction a primary alcohol + NAD(+) = an aldehyde + NADH + H(+). The enzyme catalyses a secondary alcohol + NAD(+) = a ketone + NADH + H(+). Inhibited by 2,2,2-trifluoroethanol and pyrazole. The sequence is that of Alcohol dehydrogenase (Adh) from Drosophila melanogaster (Fruit fly).